We begin with the raw amino-acid sequence, 704 residues long: Serotransferrin (704 aa).

The N-terminal stretch at 1 to 19 (MRPAVRALLACAVLGLCLA) is a signal peptide. Transferrin-like domains follow at residues 25 to 351 (VRWC…NLRE) and 364 to 689 (VKWC…NLRQ). Intrachain disulfides connect Cys28–Cys66 and Cys38–Cys57. A Dimethylated arginine modification is found at Arg42. Fe(3+)-binding residues include Asp81 and Tyr113. 5 disulfide bridges follow: Cys136/Cys217, Cys176/Cys192, Cys179/Cys200, Cys189/Cys202, and Cys250/Cys264. Residues Thr138, Arg142, Ala144, and Gly145 each contribute to the hydrogencarbonate site. A Fe(3+)-binding site is contributed by Tyr211. His272 contributes to the Fe(3+) binding site. Intrachain disulfides connect Cys362–Cys622, Cys367–Cys399, Cys377–Cys390, Cys424–Cys699, Cys441–Cys663, Cys473–Cys549, Cys497–Cys690, Cys507–Cys521, Cys518–Cys532, Cys589–Cys603, and Cys641–Cys646. Residues Asp414 and Tyr449 each coordinate Fe(3+). Thr475, Arg479, Ala481, and Gly482 together coordinate hydrogencarbonate. Asn514 carries an N-linked (GlcNAc...) asparagine glycan. A Fe(3+)-binding site is contributed by Tyr543. His611 lines the Fe(3+) pocket. Phosphoserine is present on Ser691.

This sequence belongs to the transferrin family. As to quaternary structure, monomer. Part of a complex composed of SLC40A1/ferroportin, TF/transferrin and HEPH/hephaestin that transfers iron from cells to transferrin. In terms of tissue distribution, expressed by the liver and secreted in plasma.

Its subcellular location is the secreted. Its function is as follows. Transferrins are iron binding transport proteins which can bind two Fe(3+) ions in association with the binding of an anion, usually bicarbonate. It is responsible for the transport of iron from sites of absorption and heme degradation to those of storage and utilization. Serum transferrin may also have a further role in stimulating cell proliferation. This chain is Serotransferrin (TF), found in Bos taurus (Bovine).